The sequence spans 289 residues: 4-diphosphocytidyl-2-C-methyl-D-erythritol kinase (289 aa).

Residue lysine 16 is part of the active site. 99 to 109 (PMGGGLGGGSS) provides a ligand contact to ATP. The active site involves aspartate 141.

Belongs to the GHMP kinase family. IspE subfamily.

The catalysed reaction is 4-CDP-2-C-methyl-D-erythritol + ATP = 4-CDP-2-C-methyl-D-erythritol 2-phosphate + ADP + H(+). It participates in isoprenoid biosynthesis; isopentenyl diphosphate biosynthesis via DXP pathway; isopentenyl diphosphate from 1-deoxy-D-xylulose 5-phosphate: step 3/6. Its function is as follows. Catalyzes the phosphorylation of the position 2 hydroxy group of 4-diphosphocytidyl-2C-methyl-D-erythritol. The sequence is that of 4-diphosphocytidyl-2-C-methyl-D-erythritol kinase from Ralstonia pickettii (strain 12J).